The chain runs to 1492 residues: DNA-directed RNA polymerase subunit beta' (1492 aa).

Zn(2+) is bound by residues C67, C69, C82, and C85. Mg(2+) contacts are provided by D499, D501, and D503. Residues C867, C943, C950, and C953 each coordinate Zn(2+).

It belongs to the RNA polymerase beta' chain family. The RNAP catalytic core consists of 2 alpha, 1 beta, 1 beta' and 1 omega subunit. When a sigma factor is associated with the core the holoenzyme is formed, which can initiate transcription. Mg(2+) is required as a cofactor. Requires Zn(2+) as cofactor.

It carries out the reaction RNA(n) + a ribonucleoside 5'-triphosphate = RNA(n+1) + diphosphate. Functionally, DNA-dependent RNA polymerase catalyzes the transcription of DNA into RNA using the four ribonucleoside triphosphates as substrates. The protein is DNA-directed RNA polymerase subunit beta' of Chlorobium phaeobacteroides (strain DSM 266 / SMG 266 / 2430).